The chain runs to 317 residues: Acetyl-coenzyme A carboxylase carboxyl transferase subunit alpha (317 aa).

Residues 40–293 (LEKRSADALK…GDIITASLRS (254 aa)) enclose the CoA carboxyltransferase C-terminal domain.

It belongs to the AccA family. In terms of assembly, acetyl-CoA carboxylase is a heterohexamer composed of biotin carboxyl carrier protein (AccB), biotin carboxylase (AccC) and two subunits each of ACCase subunit alpha (AccA) and ACCase subunit beta (AccD).

It localises to the cytoplasm. The catalysed reaction is N(6)-carboxybiotinyl-L-lysyl-[protein] + acetyl-CoA = N(6)-biotinyl-L-lysyl-[protein] + malonyl-CoA. It functions in the pathway lipid metabolism; malonyl-CoA biosynthesis; malonyl-CoA from acetyl-CoA: step 1/1. Functionally, component of the acetyl coenzyme A carboxylase (ACC) complex. First, biotin carboxylase catalyzes the carboxylation of biotin on its carrier protein (BCCP) and then the CO(2) group is transferred by the carboxyltransferase to acetyl-CoA to form malonyl-CoA. This Brucella anthropi (strain ATCC 49188 / DSM 6882 / CCUG 24695 / JCM 21032 / LMG 3331 / NBRC 15819 / NCTC 12168 / Alc 37) (Ochrobactrum anthropi) protein is Acetyl-coenzyme A carboxylase carboxyl transferase subunit alpha.